Here is a 391-residue protein sequence, read N- to C-terminus: Probable chaperonin-like protein PrmG (391 aa).

Positions 153 to 191 (TTRWSVRSSPPPSNTSARTASSPPRRATHSGCRSRSSTA) are disordered. Residues 154–174 (TRWSVRSSPPPSNTSARTASS) show a composition bias toward polar residues.

The protein belongs to the chaperonin (HSP60) family.

In terms of biological role, probably plays an essential role in the productive folding of PrmA and PrmC, and thus in the formation of the active PrmABCD complex. The sequence is that of Probable chaperonin-like protein PrmG from Gordonia sp. (strain TY-5).